Reading from the N-terminus, the 490-residue chain is Proline--tRNA ligase (490 aa).

Belongs to the class-II aminoacyl-tRNA synthetase family. ProS type 3 subfamily. In terms of assembly, homodimer.

It is found in the cytoplasm. It carries out the reaction tRNA(Pro) + L-proline + ATP = L-prolyl-tRNA(Pro) + AMP + diphosphate. Catalyzes the attachment of proline to tRNA(Pro) in a two-step reaction: proline is first activated by ATP to form Pro-AMP and then transferred to the acceptor end of tRNA(Pro). This chain is Proline--tRNA ligase, found in Salinibacter ruber (strain DSM 13855 / M31).